A 161-amino-acid polypeptide reads, in one-letter code: Ribosome maturation factor RimP (161 aa).

The protein belongs to the RimP family.

The protein resides in the cytoplasm. Its function is as follows. Required for maturation of 30S ribosomal subunits. This Herminiimonas arsenicoxydans protein is Ribosome maturation factor RimP.